A 115-amino-acid polypeptide reads, in one-letter code: U3-lycotoxin-Ls1k (115 aa).

Positions 1 to 20 (MKFVLLFGVLLVTLFSYSSA) are cleaved as a signal peptide. Residues 21–44 (EMFDDFDQADEDELLSLIEKEEAR) constitute a propeptide that is removed on maturation. Intrachain disulfides connect Cys48–Cys63, Cys55–Cys72, Cys62–Cys87, and Cys74–Cys85.

The protein belongs to the neurotoxin 19 (CSTX) family. 01 subfamily. As to expression, expressed by the venom gland.

The protein localises to the secreted. This is U3-lycotoxin-Ls1k from Lycosa singoriensis (Wolf spider).